A 338-amino-acid polypeptide reads, in one-letter code: tRNA N6-adenosine threonylcarbamoyltransferase (338 aa).

2 residues coordinate Fe cation: H111 and H115. Substrate-binding positions include 134 to 138, D167, G180, and N272; that span reads LVSGG. D300 contacts Fe cation.

The protein belongs to the KAE1 / TsaD family. Requires Fe(2+) as cofactor.

Its subcellular location is the cytoplasm. It carries out the reaction L-threonylcarbamoyladenylate + adenosine(37) in tRNA = N(6)-L-threonylcarbamoyladenosine(37) in tRNA + AMP + H(+). Its function is as follows. Required for the formation of a threonylcarbamoyl group on adenosine at position 37 (t(6)A37) in tRNAs that read codons beginning with adenine. Is involved in the transfer of the threonylcarbamoyl moiety of threonylcarbamoyl-AMP (TC-AMP) to the N6 group of A37, together with TsaE and TsaB. TsaD likely plays a direct catalytic role in this reaction. The chain is tRNA N6-adenosine threonylcarbamoyltransferase from Shewanella pealeana (strain ATCC 700345 / ANG-SQ1).